Here is a 68-residue protein sequence, read N- to C-terminus: Large ribosomal subunit protein uL29 (68 aa).

It belongs to the universal ribosomal protein uL29 family.

The polypeptide is Large ribosomal subunit protein uL29 (rpl29) (Pyrococcus abyssi (strain GE5 / Orsay)).